The following is a 160-amino-acid chain: MGKIALQLKATLENITNLRPVGEDFRWYLKMKCGNCGEISDKWQYIRLMDSVALKGGRGSASMVQKCKLCARENSIEILSSTIKPYNAEDNENFKTIVEFECRGLEPVDFQPQAGFAAEGVESGTAFSDINLQEKDWTDYDEKAQESVGIYEVTHQFVKC.

4 residues coordinate Zn(2+): Cys-33, Cys-36, Cys-67, and Cys-70. Position 75 is a phosphoserine (Ser-75).

Belongs to the UPF0587 family. In terms of assembly, monomer.

The polypeptide is CXXC motif containing zinc binding protein (Homo sapiens (Human)).